The sequence spans 282 residues: Bifunctional protein FolD (282 aa).

NADP(+) is bound by residues 166–168 (GAS) and I232.

Belongs to the tetrahydrofolate dehydrogenase/cyclohydrolase family. As to quaternary structure, homodimer.

It carries out the reaction (6R)-5,10-methylene-5,6,7,8-tetrahydrofolate + NADP(+) = (6R)-5,10-methenyltetrahydrofolate + NADPH. It catalyses the reaction (6R)-5,10-methenyltetrahydrofolate + H2O = (6R)-10-formyltetrahydrofolate + H(+). The protein operates within one-carbon metabolism; tetrahydrofolate interconversion. Functionally, catalyzes the oxidation of 5,10-methylenetetrahydrofolate to 5,10-methenyltetrahydrofolate and then the hydrolysis of 5,10-methenyltetrahydrofolate to 10-formyltetrahydrofolate. This is Bifunctional protein FolD from Histophilus somni (strain 129Pt) (Haemophilus somnus).